We begin with the raw amino-acid sequence, 265 residues long: Glycosylphosphatidylinositol anchor biosynthesis protein 11 (265 aa).

Helical transmembrane passes span 49-69 (LLVV…SGLT) and 79-99 (GFLT…INLL). N-linked (GlcNAc...) asparagine glycosylation is found at Asn-111 and Asn-112. A run of 4 helical transmembrane segments spans residues 137–157 (IFVS…MGAP), 166–186 (LYLS…LSNL), 209–229 (ILSS…PIPL), and 240–260 (ITLL…SLIV).

Belongs to the PIGF family.

It localises to the endoplasmic reticulum membrane. The protein operates within glycolipid biosynthesis; glycosylphosphatidylinositol-anchor biosynthesis. Acts in the GPI biosynthetic pathway between GlcNAc-PI synthesis and GPI transfer to protein. This is Glycosylphosphatidylinositol anchor biosynthesis protein 11 (GPI11) from Candida albicans (strain SC5314 / ATCC MYA-2876) (Yeast).